Here is a 618-residue protein sequence, read N- to C-terminus: Acetolactate synthase (618 aa).

A disordered region spans residues Met-1–Pro-30. Glu-85 lines the thiamine diphosphate pocket. FAD-binding positions include Arg-187, His-293–Arg-314, and Asp-336–Asp-355. Residues Gln-429–Asn-509 are thiamine pyrophosphate binding. Mg(2+)-binding residues include Asp-480 and Asn-507.

It belongs to the TPP enzyme family. Requires Mg(2+) as cofactor. Thiamine diphosphate serves as cofactor.

It carries out the reaction 2 pyruvate + H(+) = (2S)-2-acetolactate + CO2. It participates in amino-acid biosynthesis; L-isoleucine biosynthesis; L-isoleucine from 2-oxobutanoate: step 1/4. The protein operates within amino-acid biosynthesis; L-valine biosynthesis; L-valine from pyruvate: step 1/4. The polypeptide is Acetolactate synthase (ilvB) (Mycobacterium bovis (strain ATCC BAA-935 / AF2122/97)).